We begin with the raw amino-acid sequence, 382 residues long: Succinyl-diaminopimelate desuccinylase (382 aa).

His-72 is a binding site for Zn(2+). Residue Asp-74 is part of the active site. Zn(2+) is bound at residue Asp-105. The active-site Proton acceptor is the Glu-139. Zn(2+) is bound by residues Glu-140, Glu-168, and His-354.

Belongs to the peptidase M20A family. DapE subfamily. Homodimer. It depends on Zn(2+) as a cofactor. Co(2+) is required as a cofactor.

It catalyses the reaction N-succinyl-(2S,6S)-2,6-diaminopimelate + H2O = (2S,6S)-2,6-diaminopimelate + succinate. It participates in amino-acid biosynthesis; L-lysine biosynthesis via DAP pathway; LL-2,6-diaminopimelate from (S)-tetrahydrodipicolinate (succinylase route): step 3/3. In terms of biological role, catalyzes the hydrolysis of N-succinyl-L,L-diaminopimelic acid (SDAP), forming succinate and LL-2,6-diaminopimelate (DAP), an intermediate involved in the bacterial biosynthesis of lysine and meso-diaminopimelic acid, an essential component of bacterial cell walls. This Shewanella amazonensis (strain ATCC BAA-1098 / SB2B) protein is Succinyl-diaminopimelate desuccinylase.